Reading from the N-terminus, the 421-residue chain is Testin (421 aa).

Positions 92–199 (MILTNPVAAK…GDVKLPCEMD (108 aa)) constitute a PET domain. Residues 133–164 (EKQPVAGSEGAQYRKKQLAKQLPAHDQDPSKC) form a disordered region. Residues 155–164 (PAHDQDPSKC) are compositionally biased toward basic and acidic residues. LIM zinc-binding domains lie at 234-297 (YFCY…CDSE), 299-359 (PRCA…NHAV), and 362-421 (QGCH…KMMS).

Belongs to the prickle / espinas / testin family. As to quaternary structure, interacts via LIM domain 1 with ZYX. Interacts (via LIM domain 3) with ENAH and VASP. Interacts with ALKBH4, talin, actin, alpha-actinin, GRIP1 and PXN. Interacts (via LIM domain 2) with ACTL7A (via N-terminus). Heterodimer with ACTL7A; the heterodimer interacts with ENAH to form a heterotrimer.

It is found in the cytoplasm. It localises to the cell junction. Its subcellular location is the focal adhesion. Functionally, scaffold protein that may play a role in cell adhesion, cell spreading and in the reorganization of the actin cytoskeleton. Plays a role in the regulation of cell proliferation. May act as a tumor suppressor. The sequence is that of Testin (TES) from Plecturocebus moloch (Dusky titi monkey).